The following is a 320-amino-acid chain: Biotin synthase (320 aa).

A Radical SAM core domain is found at 46 to 275; sequence NMGRRVDLCS…YAHIRYAGGR (230 aa). C64, C68, and C71 together coordinate [4Fe-4S] cluster. S108, C140, C200, and R270 together coordinate [2Fe-2S] cluster.

Belongs to the radical SAM superfamily. Biotin synthase family. Homodimer. [4Fe-4S] cluster is required as a cofactor. Requires [2Fe-2S] cluster as cofactor.

The catalysed reaction is (4R,5S)-dethiobiotin + (sulfur carrier)-SH + 2 reduced [2Fe-2S]-[ferredoxin] + 2 S-adenosyl-L-methionine = (sulfur carrier)-H + biotin + 2 5'-deoxyadenosine + 2 L-methionine + 2 oxidized [2Fe-2S]-[ferredoxin]. Its pathway is cofactor biosynthesis; biotin biosynthesis; biotin from 7,8-diaminononanoate: step 2/2. Its function is as follows. Catalyzes the conversion of dethiobiotin (DTB) to biotin by the insertion of a sulfur atom into dethiobiotin via a radical-based mechanism. In Acetivibrio thermocellus (strain ATCC 27405 / DSM 1237 / JCM 9322 / NBRC 103400 / NCIMB 10682 / NRRL B-4536 / VPI 7372) (Clostridium thermocellum), this protein is Biotin synthase.